Reading from the N-terminus, the 395-residue chain is Putative 8-amino-7-oxononanoate synthase (395 aa).

R23 lines the substrate pocket. 110-111 serves as a coordination point for pyridoxal 5'-phosphate; it reads GY. H135 is a binding site for substrate. Pyridoxal 5'-phosphate is bound by residues S182, 207-210, and 239-242; these read DEAH and TFSK. The residue at position 242 (K242) is an N6-(pyridoxal phosphate)lysine. Position 356 (T356) interacts with substrate.

This sequence belongs to the class-II pyridoxal-phosphate-dependent aminotransferase family. BioF subfamily. Homodimer. Requires pyridoxal 5'-phosphate as cofactor.

It catalyses the reaction 6-carboxyhexanoyl-[ACP] + L-alanine + H(+) = (8S)-8-amino-7-oxononanoate + holo-[ACP] + CO2. Its pathway is cofactor biosynthesis; biotin biosynthesis. Catalyzes the decarboxylative condensation of pimeloyl-[acyl-carrier protein] and L-alanine to produce 8-amino-7-oxononanoate (AON), [acyl-carrier protein], and carbon dioxide. The sequence is that of Putative 8-amino-7-oxononanoate synthase (bioF) from Bacillus cereus (strain ATCC 10987 / NRS 248).